The sequence spans 39 residues: Photosystem II reaction center protein J (39 aa).

A helical transmembrane segment spans residues 9-29 (LWLVATVGGIAAITVLGIFIY).

Belongs to the PsbJ family. As to quaternary structure, PSII is composed of 1 copy each of membrane proteins PsbA, PsbB, PsbC, PsbD, PsbE, PsbF, PsbH, PsbI, PsbJ, PsbK, PsbL, PsbM, PsbT, PsbX, PsbY, PsbZ, Psb30/Ycf12, at least 3 peripheral proteins of the oxygen-evolving complex and a large number of cofactors. It forms dimeric complexes.

It localises to the plastid. It is found in the chloroplast thylakoid membrane. Its function is as follows. One of the components of the core complex of photosystem II (PSII). PSII is a light-driven water:plastoquinone oxidoreductase that uses light energy to abstract electrons from H(2)O, generating O(2) and a proton gradient subsequently used for ATP formation. It consists of a core antenna complex that captures photons, and an electron transfer chain that converts photonic excitation into a charge separation. This Pyropia yezoensis (Susabi-nori) protein is Photosystem II reaction center protein J.